The primary structure comprises 426 residues: Arrestin domain-containing protein 17 (426 aa).

Over residues 320 to 329 (QSAGNGSLPK) the composition is skewed to polar residues. The segment at 320 to 340 (QSAGNGSLPKSSIKDSPPKWD) is disordered. The segment covering 331 to 340 (SIKDSPPKWD) has biased composition (basic and acidic residues).

It belongs to the arrestin family. In terms of assembly, interacts with tax-6. Phosphorylated. Dephosphorylated by tax-6 in vitro. Expressed from the comma stage to adulthood in the nervous system, including sensory neurons and interneurons posterior to the nerve ring, dorsal and ventral nerve cords, tail ganglia and, CEP, HSN, ASK, ADL, ASH and ASJ neurons.

Its function is as follows. Involved in several behavioral responses including chemotaxis towards lysine and adaptation to repeated osmotic stress. In addition, plays a role in resuming egg-laying and locomotion after starvation. This Caenorhabditis elegans protein is Arrestin domain-containing protein 17.